A 199-amino-acid chain; its full sequence is Early activation antigen CD69 (199 aa).

Residues 1–14 (MDSENCSITENSSS) show a composition bias toward polar residues. The interval 1–20 (MDSENCSITENSSSHLERGQ) is disordered. The Cytoplasmic segment spans residues 1–40 (MDSENCSITENSSSHLERGQKDHGTSIHFEKHHEGSIQVS). Residues 41 to 61 (IPWAVLIVVLITSLIIALIAL) traverse the membrane as a helical; Signal-anchor for type II membrane protein segment. Residues 62 to 199 (NVGKYNCPGL…FHWVCSKPSR (138 aa)) lie on the Extracellular side of the membrane. Cystine bridges form between Cys-85–Cys-96, Cys-113–Cys-194, and Cys-173–Cys-186. In terms of domain architecture, C-type lectin spans 92-195 (YKRTCYFFST…CEANFHWVCS (104 aa)). N-linked (GlcNAc...) asparagine glycosylation is found at Asn-150, Asn-166, and Asn-180.

As to quaternary structure, homodimer; disulfide-linked. Interacts with S100A8 and S100A9. Interacts with galactin-1/LGALS1. Interacts with S1PR1; this interaction mediates S1PR1 degradation. Interacts with JAK3 and STAT5. Constitutive Ser/Thr phosphorylation in both mature thymocytes and activated T-lymphocytes. As to expression, expressed on the surface of activated T-cells, B-cells, natural killer cells, neutrophils and platelets. Present also in eosinophils.

It is found in the cell membrane. In terms of biological role, transmembrane protein expressed mainly on T-cells resident in mucosa that plays an essential role in immune cell homeostasis. Rapidly expressed on the surface of platelets, T-lymphocytes and NK cells upon activation by various stimuli, such as antigen recognition or cytokine signaling, stimulates different signaling pathways in different cell types. Negatively regulates Th17 cell differentiation through its carbohydrate dependent interaction with galectin-1/LGALS1 present on immature dendritic cells. Association of CD69 cytoplasmic tail with the JAK3/STAT5 signaling pathway regulates the transcription of RORgamma/RORC and, consequently, differentiation toward the Th17 lineage. Also acts via the S100A8/S100A9 complex present on peripheral blood mononuclear cells to promote the conversion of naive CD4 T-cells into regulatory T-cells. Acts as an oxidized low-density lipoprotein (oxLDL) receptor in CD4 T-lymphocytes and negatively regulates the inflammatory response by inducing the expression of PDCD1 through the activation of NFAT. Participates in adipose tissue-derived mesenchymal stem cells (ASCs)-mediated protection against P.aeruginosa infection. Mechanistically, specifically recognizes P.aeruginosa to promote ERK1 activation, followed by granulocyte-macrophage colony-stimulating factor (GM-CSF) and other inflammatory cytokines secretion. In eosinophils, induces IL-10 production through the ERK1/2 pathway. Negatively regulates the chemotactic responses of effector lymphocytes and dendritic cells (DCs) to sphingosine 1 phosphate/S1P by acting as a S1PR1 receptor agonist and facilitating the internalization and degradation of the receptor. The sequence is that of Early activation antigen CD69 (Cd69) from Mus musculus (Mouse).